The sequence spans 362 residues: Biotin synthase (362 aa).

The region spanning 39–267 (NVVQVSTLLS…ETQVRLSAGR (229 aa)) is the Radical SAM core domain. The [4Fe-4S] cluster site is built by C54, C58, and C61. C98, C130, C190, and R262 together coordinate [2Fe-2S] cluster. Residues 317–362 (PFTKVSQPTTVEAKDSRYESLGEKPKWSRPSHTIEKNLELSGKGKN) are disordered. Residues 328-354 (EAKDSRYESLGEKPKWSRPSHTIEKNL) are compositionally biased toward basic and acidic residues.

It belongs to the radical SAM superfamily. Biotin synthase family. Homodimer. [4Fe-4S] cluster serves as cofactor. The cofactor is [2Fe-2S] cluster.

It carries out the reaction (4R,5S)-dethiobiotin + (sulfur carrier)-SH + 2 reduced [2Fe-2S]-[ferredoxin] + 2 S-adenosyl-L-methionine = (sulfur carrier)-H + biotin + 2 5'-deoxyadenosine + 2 L-methionine + 2 oxidized [2Fe-2S]-[ferredoxin]. It functions in the pathway cofactor biosynthesis; biotin biosynthesis; biotin from 7,8-diaminononanoate: step 2/2. In terms of biological role, catalyzes the conversion of dethiobiotin (DTB) to biotin by the insertion of a sulfur atom into dethiobiotin via a radical-based mechanism. This is Biotin synthase from Flavobacterium psychrophilum (strain ATCC 49511 / DSM 21280 / CIP 103535 / JIP02/86).